The primary structure comprises 178 residues: ATP synthase subunit delta (178 aa).

Belongs to the ATPase delta chain family. In terms of assembly, F-type ATPases have 2 components, F(1) - the catalytic core - and F(0) - the membrane proton channel. F(1) has five subunits: alpha(3), beta(3), gamma(1), delta(1), epsilon(1). F(0) has three main subunits: a(1), b(2) and c(10-14). The alpha and beta chains form an alternating ring which encloses part of the gamma chain. F(1) is attached to F(0) by a central stalk formed by the gamma and epsilon chains, while a peripheral stalk is formed by the delta and b chains.

Its subcellular location is the cell inner membrane. Functionally, f(1)F(0) ATP synthase produces ATP from ADP in the presence of a proton or sodium gradient. F-type ATPases consist of two structural domains, F(1) containing the extramembraneous catalytic core and F(0) containing the membrane proton channel, linked together by a central stalk and a peripheral stalk. During catalysis, ATP synthesis in the catalytic domain of F(1) is coupled via a rotary mechanism of the central stalk subunits to proton translocation. This protein is part of the stalk that links CF(0) to CF(1). It either transmits conformational changes from CF(0) to CF(1) or is implicated in proton conduction. The polypeptide is ATP synthase subunit delta (Hahella chejuensis (strain KCTC 2396)).